A 233-amino-acid chain; its full sequence is Superoxide dismutase [Mn], mitochondrial (233 aa).

Residues 1 to 26 (MFAKTAAANLTKKGGLSLLSTTARRT) constitute a mitochondrion transit peptide. H52 and H107 together coordinate Mn(2+). T147 and T149 each carry phosphothreonine. D194 and H198 together coordinate Mn(2+).

It belongs to the iron/manganese superoxide dismutase family. Homotetramer. Requires Mn(2+) as cofactor.

The protein resides in the mitochondrion matrix. The catalysed reaction is 2 superoxide + 2 H(+) = H2O2 + O2. In terms of biological role, destroys superoxide anion radicals which are normally produced within the cells and which are toxic to biological systems. The polypeptide is Superoxide dismutase [Mn], mitochondrial (SOD2) (Saccharomyces cerevisiae (strain ATCC 204508 / S288c) (Baker's yeast)).